Here is an 842-residue protein sequence, read N- to C-terminus: Glycogen phosphorylase, muscle form (842 aa).

Position 2 is an N-acetylserine (serine 2). Serine 15 carries the phosphoserine; by PHK; in form phosphorylase A modification. Position 26 is a phosphoserine (serine 26). Residues aspartate 43 and tyrosine 76 each contribute to the AMP site. Phosphotyrosine is present on residues tyrosine 204 and tyrosine 227. Residue 310-319 (RRFKSSKFGC) coordinates AMP. Position 430 is a phosphoserine (serine 430). Residue tyrosine 473 is modified to Phosphotyrosine. Residue serine 514 is modified to Phosphoserine. Lysine 681 carries the post-translational modification N6-(pyridoxal phosphate)lysine. Phosphoserine occurs at positions 747 and 748.

It belongs to the glycogen phosphorylase family. In terms of assembly, homodimer. Homotetramer; to form the enzymatically active phosphorylase A. Pyridoxal 5'-phosphate is required as a cofactor. Phosphorylation of Ser-15 converts phosphorylase B (unphosphorylated) to phosphorylase A.

The catalysed reaction is [(1-&gt;4)-alpha-D-glucosyl](n) + phosphate = [(1-&gt;4)-alpha-D-glucosyl](n-1) + alpha-D-glucose 1-phosphate. With respect to regulation, allosterically regulated through the non-covalent binding of metabolites, being activated by AMP and inhibited by ATP, ADP, and glucose-6-phosphate. The activity is also controlled by post-translational modifications including phosphorylation. Its function is as follows. Allosteric enzyme that catalyzes the rate-limiting step in glycogen catabolism, the phosphorolytic cleavage of glycogen to produce glucose-1-phosphate, and plays a central role in maintaining cellular and organismal glucose homeostasis. This Rattus norvegicus (Rat) protein is Glycogen phosphorylase, muscle form.